Consider the following 81-residue polypeptide: Photosystem I iron-sulfur center (81 aa).

2 consecutive 4Fe-4S ferredoxin-type domains span residues 2 to 31 and 39 to 68; these read AHSVKIYDTCIGCTQCVRACPTDVLEMIPW and IASAPRTEDCAGCKRCESACPTDFLSVRVY. Residues Cys11, Cys14, Cys17, Cys21, Cys48, Cys51, Cys54, and Cys58 each contribute to the [4Fe-4S] cluster site.

In terms of assembly, the eukaryotic PSI reaction center is composed of at least 11 subunits. [4Fe-4S] cluster serves as cofactor.

It is found in the plastid. Its subcellular location is the chloroplast thylakoid membrane. It carries out the reaction reduced [plastocyanin] + hnu + oxidized [2Fe-2S]-[ferredoxin] = oxidized [plastocyanin] + reduced [2Fe-2S]-[ferredoxin]. Apoprotein for the two 4Fe-4S centers FA and FB of photosystem I (PSI); essential for photochemical activity. FB is the terminal electron acceptor of PSI, donating electrons to ferredoxin. The C-terminus interacts with PsaA/B/D and helps assemble the protein into the PSI complex. Required for binding of PsaD and PsaE to PSI. PSI is a plastocyanin-ferredoxin oxidoreductase, converting photonic excitation into a charge separation, which transfers an electron from the donor P700 chlorophyll pair to the spectroscopically characterized acceptors A0, A1, FX, FA and FB in turn. This Pinus thunbergii (Japanese black pine) protein is Photosystem I iron-sulfur center.